The primary structure comprises 490 residues: MFRIQLRTMSSKTCKSDYPKEFVSFLNSSHSPYHTVHNIKKHLVSNGFKELSERDSWAGHVAQKGKYFVTRNGSSIIAFAVGGKWEPGNPIAITGAHTDSPALRIKPISKRVSEKYLQVGVETYGGAIWHSWFDKDLGVAGRVFVKDAKTGKSIARLVDLNRPLLKIPTLAIHLDRDVNQKFEFNRETQLLPIGGLQEDKTEAKTEKEINNGEFTSIKTIVQRHHAELLGLIAKELAIDTIEDIEDFELILYDHNASTLGGFNDEFVFSGRLDNLTSCFTSMHGLTLAADTEIDRESGIRLMACFDHEEIGSSSAQGADSNFLPNILERLSILKGDGSDQTKPLFHSAILETSAKSFFLSSDVAHAVHPNYANKYESQHKPLLGGGPVIKINANQRYMTNSPGLVLVKRLAEAAKVPLQLFVVANDSPCGSTIGPILASKTGIRTLDLGNPVLSMHSIRETGGSADLEFQIKLFKEFFERYTSIESEIVV.

His-97 contributes to the Zn(2+) binding site. Residue His-173 coordinates substrate. Positions 273, 308, 309, and 362 each coordinate Zn(2+). Substrate is bound at residue Glu-308. 4 residues coordinate substrate: Asp-362, His-365, Lys-390, and Tyr-397. His-456 provides a ligand contact to Zn(2+).

The protein belongs to the peptidase M18 family. In terms of assembly, tetrahedron-shaped homododecamer built from six homodimers. Zn(2+) is required as a cofactor.

It localises to the cytoplasm. The protein localises to the vacuole lumen. The catalysed reaction is Release of an N-terminal aspartate or glutamate from a peptide, with a preference for aspartate.. The metalloproteases inhibitors EDTA and 1.10-phenanthroline both inhibit the activity, whereas bestatin, an inhibitor of most aminopeptidases, does not affect enzyme activity. Its function is as follows. Aspartyl aminopeptidase that contributes to peptide degradation both in the cytosol and the vacuole. Cells may respond to environmental conditions by changing the distributions of the cytosolic enzyme to the vacuole when cells need more active vacuolar degradation. This Saccharomyces cerevisiae (strain ATCC 204508 / S288c) (Baker's yeast) protein is Aspartyl aminopeptidase 4 (APE4).